The primary structure comprises 1013 residues: Sodium/potassium-transporting ATPase subunit alpha-3 (1013 aa).

A disordered region spans residues 1-24; sequence MGDKKDDKDSPKKNKGKERRDLDD. Over 1-77 the chain is Cytoplasmic; sequence MGDKKDDKDS…NALTPPPTTP (77 aa). A phosphoserine mark is found at Ser-37 and Ser-56. The segment at 72–74 is interaction with phosphoinositide-3 kinase; it reads PPP. Residues 78–98 traverse the membrane as a helical segment; that stretch reads EWVKFCRQLFGGFSILLWIGA. Topologically, residues 99–121 are extracellular; that stretch reads ILCFLAYGIQAGTEDDPSGDNLY. A helical transmembrane segment spans residues 122–142; the sequence is LGIVLAAVVIITGCFSYYQEA. The Cytoplasmic segment spans residues 143–278; that stretch reads KSSKIMESFK…VGKTPIAIEI (136 aa). Phosphoserine occurs at positions 218 and 265. Residues 279–298 traverse the membrane as a helical segment; that stretch reads EHFIQLITGVAVFLGVSFFI. Over 299-310 the chain is Extracellular; sequence LSLILGYTWLEA. The chain crosses the membrane as a helical span at residues 311–328; that stretch reads VIFLIGIIVANVPEGLLA. Over 329–762 the chain is Cytoplasmic; sequence TVTVCLTLTA…EEGRLIFDNL (434 aa). Asp-366 serves as the catalytic 4-aspartylphosphate intermediate. Residue Ser-442 is modified to Phosphoserine. Tyr-548 is subject to Phosphotyrosine. Mg(2+) contacts are provided by Asp-707 and Asp-711. Residues 763-782 form a helical membrane-spanning segment; it reads KKSIAYTLTSNIPEITPFLL. Residues 783–792 lie on the Extracellular side of the membrane; the sequence is FIMANIPLPL. The helical transmembrane segment at 793–813 threads the bilayer; it reads GTITILCIDLGTDMVPAISLA. Over 814–833 the chain is Cytoplasmic; the sequence is YEAAESDIMKRQPRNPRTDK. The helical transmembrane segment at 834–856 threads the bilayer; sequence LVNERLISMAYGQIGMIQALGGF. The Extracellular segment spans residues 857 to 908; that stretch reads FSYFVILAENGFLPGNLVGIRLNWDDRTVNDLEDSYGQQWTYEQRKVVEFTC. The chain crosses the membrane as a helical span at residues 909 to 928; that stretch reads HTAFFVSIVVVQWADLIICK. The Cytoplasmic segment spans residues 929–941; that stretch reads TRRNSVFQQGMKN. Ser-933 carries the post-translational modification Phosphoserine; by PKA. Residues 942–960 traverse the membrane as a helical segment; it reads KILIFGLFEETALAAFLSY. Over 961–975 the chain is Extracellular; it reads CPGMDVALRMYPLKP. The helical transmembrane segment at 976–996 threads the bilayer; that stretch reads SWWFCAFPYSFLIFVYDEIRK. Topologically, residues 997-1013 are cytoplasmic; it reads LILRRNPGGWVEKETYY.

This sequence belongs to the cation transport ATPase (P-type) (TC 3.A.3) family. Type IIC subfamily. In terms of assembly, the sodium/potassium-transporting ATPase is composed of a catalytic alpha subunit, an auxiliary non-catalytic beta subunit and an additional regulatory subunit. Interacts with regulatory subunit FXYD1.

It is found in the cell membrane. The enzyme catalyses K(+)(out) + Na(+)(in) + ATP + H2O = K(+)(in) + Na(+)(out) + ADP + phosphate + H(+). Its function is as follows. This is the catalytic component of the active enzyme, which catalyzes the hydrolysis of ATP coupled with the exchange of sodium and potassium ions across the plasma membrane. This action creates the electrochemical gradient of sodium and potassium ions, providing the energy for active transport of various nutrients. The polypeptide is Sodium/potassium-transporting ATPase subunit alpha-3 (ATP1A3) (Homo sapiens (Human)).